The chain runs to 66 residues: Large ribosomal subunit protein bL35 (66 aa).

Composition is skewed to basic residues over residues 1 to 16 and 38 to 49; these read MPKMKTHRGAAKRVKR and TKQKRQLRKARL. The segment at 1–49 is disordered; the sequence is MPKMKTHRGAAKRVKRTASGQLKRSRAFTSHLFANKSTKQKRQLRKARL.

Belongs to the bacterial ribosomal protein bL35 family.

This chain is Large ribosomal subunit protein bL35, found in Staphylococcus aureus (strain MSSA476).